The chain runs to 133 residues: Small ribosomal subunit protein bS6 (133 aa).

The segment at 93–133 (KTAVTEPSPMMKEEPRRERRDDSAPRQERAEKKTETTEDNA) is disordered. A compositionally biased stretch (basic and acidic residues) spans 103-133 (MKEEPRRERRDDSAPRQERAEKKTETTEDNA).

This sequence belongs to the bacterial ribosomal protein bS6 family.

In terms of biological role, binds together with bS18 to 16S ribosomal RNA. This chain is Small ribosomal subunit protein bS6, found in Alteromonas mediterranea (strain DSM 17117 / CIP 110805 / LMG 28347 / Deep ecotype).